The chain runs to 273 residues: uncharacterized protein (273 aa).

An NAD(+)-binding site is contributed by 10–34 (VITGAATGIGQATAEVFANEGARVI). Residue Ser142 coordinates substrate. Tyr155 serves as the catalytic Proton acceptor.

This sequence belongs to the short-chain dehydrogenases/reductases (SDR) family.

This is an uncharacterized protein from Bacillus subtilis (strain 168).